The primary structure comprises 1043 residues: MTLALGRRLKIRALVHVAGEPIPYFWPMRTFIHHNPLYGLEHLPFEQAVAMGERLFRAHGFLPRARQQAYLAAGRVDATVLAAQVARFCADQPEVAGLDLERLLLTLLTDVETPLGAPPTLADAADVHAVLRGAALPAREIPSGALAAQVGSDMPPGRPLYAMLDLLFGTEIGATLDELVIKSCLDFFDEGQSVWQMPGREQGLFRAWSAVARRNLRLFIRGLHIKRILAVDDTPEGIISHVMGELGVPEDDWMNHFTCELTRLHGWAGFIRWRSGAKHYHWTRRYPADLVDYLAIRLVLGLALLREHAARAGTPANLAELARRVESNPAEAYLCREFHGGRVLPEMAHAVEDAIAARRPARTARLLPRYLERKREIEARRHAQSLTRLAERAGMGAALQRLAPDDLARLTALLARFEDEEGRMWLAAREAHYMGRLLPCLDLAPPAPPEKRPFAQVMFCIDVRSERIRRHLEKLGSYQTFGIAGFFGVPVSFIGLEKGSETHLCPVVATPKNVVLELAITRNADDEAFVSTLEQVFHELKASVLSPFITVEAIGLLFGLDMFGKSLAPLAYSRWRERLHPDKPDTRLLLDKLSREQAESIIRSLQRALIVKAVRRELGIPRELLTDEMIRELRETALGNQAQAAGFAQRFELDCDAETGFVERLRQVYRIDRGYARLQLERLGRIGFTLDEQVHFVGQALRSIGLVSGFSRFVLLTGHGSTSENNPYESALDCGACGGNHGITNARVLAQIANKTAVRARLREQGIVIADDTWFVPAFHNTTTDELRLYDLDLLPPSHLVYTERLINGLQAASHLCAAERMRTLQDTPGDADENGDSAGAYRLARRNALDWSQVRPEWGLARNAAFVIGRRDATGGLDLEGRVFLHSYDYRCDPRGRLLENILAGPLVVGQWINMEHYFSAVDNAHYGSGSKVYHNIAGRFGVMTGNLSDLRTGLPAQTVLKDSAPYHEPLRLLTVIEAPFAHARAAVEGVVKVKNLMHNGWLRMAVVDPETRFAYVFEDGGWRQYPHDAVSEAVEEKETVL.

Residues cysteine 460, aspartate 462, histidine 719, and cysteine 734 each coordinate Zn(2+).

The protein belongs to the inorganic carbon transporter (TC 9.A.2) DabA family. As to quaternary structure, forms a complex with DabB. The cofactor is Zn(2+).

It localises to the cell inner membrane. Part of an energy-coupled inorganic carbon pump. The sequence is that of Probable inorganic carbon transporter subunit DabA from Thiobacillus denitrificans (strain ATCC 25259 / T1).